The following is a 134-amino-acid chain: Lymphocyte antigen 6 complex locus protein G6d (134 aa).

A signal peptide spans 1 to 19; sequence MNSQLIGILFSALLGAALG. Residues 22 to 121 enclose the UPAR/Ly6 domain; it reads MRCYDCGGGP…ASSSTPLCIL (100 aa). Intrachain disulfides connect Cys24–Cys48, Cys27–Cys35, Cys42–Cys76, Cys82–Cys101, and Cys102–Cys107. The O-linked (GalNAc...) threonine glycan is linked to Thr68. A lipid anchor (GPI-anchor amidated asparagine) is attached at Asn108. The propeptide at 109 to 134 is removed in mature form; the sequence is GAVASSSTPLCILAAVTTLAWLLSGQ.

As to quaternary structure, homodimer. O-glycosylated.

It localises to the cell membrane. This Rattus norvegicus (Rat) protein is Lymphocyte antigen 6 complex locus protein G6d (Ly6g6d).